The chain runs to 263 residues: Probable septum site-determining protein MinC (263 aa).

Positions 107 to 159 (LPPSGARERPLDIKDSAPRKPAEEPSPSAGEARPEPAKAEEKPADPVSRPTKV) are disordered. Basic and acidic residues-rich tracts occupy residues 112–129 (ARERPLDIKDSAPRKPAE) and 138–150 (ARPEPAKAEEKPA).

It belongs to the MinC family. As to quaternary structure, interacts with MinD and FtsZ.

Cell division inhibitor that blocks the formation of polar Z ring septums. Rapidly oscillates between the poles of the cell to destabilize FtsZ filaments that have formed before they mature into polar Z rings. Prevents FtsZ polymerization. This chain is Probable septum site-determining protein MinC, found in Pseudomonas aeruginosa (strain UCBPP-PA14).